Consider the following 254-residue polypeptide: 4-hydroxy-tetrahydrodipicolinate reductase (254 aa).

NAD(+) is bound by residues 8–13, 87–89, and 111–114; these read GASGKM, GTT, and ATNM. H143 functions as the Proton donor/acceptor in the catalytic mechanism. H144 contacts (S)-2,3,4,5-tetrahydrodipicolinate. Catalysis depends on K147, which acts as the Proton donor. Residue 153–154 coordinates (S)-2,3,4,5-tetrahydrodipicolinate; sequence GT.

The protein belongs to the DapB family.

It is found in the cytoplasm. The catalysed reaction is (S)-2,3,4,5-tetrahydrodipicolinate + NAD(+) + H2O = (2S,4S)-4-hydroxy-2,3,4,5-tetrahydrodipicolinate + NADH + H(+). It catalyses the reaction (S)-2,3,4,5-tetrahydrodipicolinate + NADP(+) + H2O = (2S,4S)-4-hydroxy-2,3,4,5-tetrahydrodipicolinate + NADPH + H(+). Its pathway is amino-acid biosynthesis; L-lysine biosynthesis via DAP pathway; (S)-tetrahydrodipicolinate from L-aspartate: step 4/4. Functionally, catalyzes the conversion of 4-hydroxy-tetrahydrodipicolinate (HTPA) to tetrahydrodipicolinate. In Campylobacter curvus (strain 525.92), this protein is 4-hydroxy-tetrahydrodipicolinate reductase.